Consider the following 641-residue polypeptide: Calpain-6 (641 aa).

The 318-residue stretch at Leu-26 to Val-343 folds into the Calpain catalytic domain. The interval Asn-344–Arg-495 is domain III. The C2 domain occupies Thr-498 to Ala-621.

The protein belongs to the peptidase C2 family. In terms of assembly, interacts (via domain III) with microtubules. Interacts (via domain II) with ARHGEF2 (via the N-terminal zinc finger).

It is found in the cytoplasm. The protein localises to the perinuclear region. It localises to the cytoskeleton. The protein resides in the spindle. Microtubule-stabilizing protein that may be involved in the regulation of microtubule dynamics and cytoskeletal organization. May act as a regulator of RAC1 activity through interaction with ARHGEF2 to control lamellipodial formation and cell mobility. Does not seem to have protease activity as it has lost the active site residues. In Rattus norvegicus (Rat), this protein is Calpain-6 (Capn6).